The following is a 94-amino-acid chain: CRISPR-associated endoribonuclease Cas2 (94 aa).

Asp-11 lines the Mg(2+) pocket.

Belongs to the CRISPR-associated endoribonuclease Cas2 protein family. As to quaternary structure, homodimer, forms a heterotetramer with a Cas1 homodimer. Mg(2+) is required as a cofactor.

Its function is as follows. CRISPR (clustered regularly interspaced short palindromic repeat), is an adaptive immune system that provides protection against mobile genetic elements (viruses, transposable elements and conjugative plasmids). CRISPR clusters contain sequences complementary to antecedent mobile elements and target invading nucleic acids. CRISPR clusters are transcribed and processed into CRISPR RNA (crRNA). Functions as a ssRNA-specific endoribonuclease. Involved in the integration of spacer DNA into the CRISPR cassette. This chain is CRISPR-associated endoribonuclease Cas2, found in Thermus thermophilus (strain ATCC 27634 / DSM 579 / HB8).